Consider the following 148-residue polypeptide: MTPELNLKSLGAKTTYIFEYNSQLLEAFPNPNPNLDPLITLECKEFTSLCPITSQPDFGVIFIRYIPKDKMVESKSLKLYLFSYRNHGSFHESCINTILLDLVKLLEPKYLEVYGDFASRGGIAIKPFVNYAIKEYQEFKEKRLLNAK.

Residue Cys50 is the Thioimide intermediate of the active site. Asp57 serves as the catalytic Proton donor. Substrate contacts are provided by residues 72 to 74 and 91 to 92; these read VES and HE.

Belongs to the GTP cyclohydrolase I family. QueF type 1 subfamily.

It is found in the cytoplasm. It catalyses the reaction 7-aminomethyl-7-carbaguanine + 2 NADP(+) = 7-cyano-7-deazaguanine + 2 NADPH + 3 H(+). Its pathway is tRNA modification; tRNA-queuosine biosynthesis. Functionally, catalyzes the NADPH-dependent reduction of 7-cyano-7-deazaguanine (preQ0) to 7-aminomethyl-7-deazaguanine (preQ1). This is NADPH-dependent 7-cyano-7-deazaguanine reductase from Helicobacter pylori (strain HPAG1).